Consider the following 461-residue polypeptide: tRNA modification GTPase MnmE (461 aa).

Residues Arg27, Glu89, and Arg128 each coordinate (6S)-5-formyl-5,6,7,8-tetrahydrofolate. The 159-residue stretch at Gly224–Phe382 folds into the TrmE-type G domain. Asn234 lines the K(+) pocket. Residues Asn234–Ser239, Thr253–Thr259, and Asp278–Gly281 contribute to the GTP site. Mg(2+) is bound at residue Ser238. K(+) contacts are provided by Thr253, Val255, and Thr258. Mg(2+) is bound at residue Thr259. Lys461 lines the (6S)-5-formyl-5,6,7,8-tetrahydrofolate pocket.

This sequence belongs to the TRAFAC class TrmE-Era-EngA-EngB-Septin-like GTPase superfamily. TrmE GTPase family. In terms of assembly, homodimer. Heterotetramer of two MnmE and two MnmG subunits. Requires K(+) as cofactor.

Its subcellular location is the cytoplasm. Exhibits a very high intrinsic GTPase hydrolysis rate. Involved in the addition of a carboxymethylaminomethyl (cmnm) group at the wobble position (U34) of certain tRNAs, forming tRNA-cmnm(5)s(2)U34. In Lactobacillus helveticus (strain DPC 4571), this protein is tRNA modification GTPase MnmE.